The following is a 473-amino-acid chain: Pre-mRNA-splicing factor prp5 (473 aa).

WD repeat units follow at residues 161–191, 203–233, 245–275, 287–317, 329–358, 370–399, and 419–449; these read GHLG…KIWD, GHIA…KCWD, GHLS…RVWD, GHKS…RLWD, HHKK…KHWK, GHNA…CFWD, and DSEA…KIYK.

This sequence belongs to the WD repeat PRL1/PRL2 family. As to quaternary structure, belongs to the 40S cdc5-associated complex (or cwf complex), a spliceosome sub-complex reminiscent of a late-stage spliceosome composed of the U2, U5 and U6 snRNAs and at least brr2, cdc5, cwf2/prp3, cwf3/syf1, cwf4/syf3, cwf5/ecm2, spp42/cwf6, cwf7/spf27, cwf8, cwf9, cwf10, cwf11, cwf12, prp45/cwf13, cwf14, cwf15, cwf16, cwf17, cwf18, cwf19, cwf20, cwf21, cwf22, cwf23, cwf24, cwf25, cwf26, cyp7/cwf27, cwf28, cwf29/ist3, lea1, msl1, prp5/cwf1, prp10, prp12/sap130, prp17, prp22, sap61, sap62, sap114, sap145, slu7, smb1, smd1, smd3, smf1, smg1 and syf2.

The protein resides in the nucleus. Functionally, required for both cell cycle progression at G2/M and pre-mRNA splicing. Interacts genetically with the PRP4 kinase. The chain is Pre-mRNA-splicing factor prp5 (prp5) from Schizosaccharomyces pombe (strain 972 / ATCC 24843) (Fission yeast).